The following is a 190-amino-acid chain: Large ribosomal subunit protein bL17 (190 aa).

The interval 128-190 is disordered; sequence KKTAGRKAAQ…VEENNEQNKA (63 aa). Residues 143-154 show a composition bias toward low complexity; that stretch reads ALAPAEETPAPT. Positions 179–190 are enriched in acidic residues; that stretch reads LAVEENNEQNKA.

It belongs to the bacterial ribosomal protein bL17 family. As to quaternary structure, part of the 50S ribosomal subunit. Contacts protein L32.

In Salinispora tropica (strain ATCC BAA-916 / DSM 44818 / JCM 13857 / NBRC 105044 / CNB-440), this protein is Large ribosomal subunit protein bL17.